The chain runs to 714 residues: Cadherin-13 (714 aa).

A signal peptide spans 1 to 22; sequence MQPRTPLTLCVLLSQVLLVTSA. Positions 23–138 are excised as a propeptide; sequence DDLECTPGFQ…RTSPVPRQKR (116 aa). Cadherin domains follow at residues 143 to 245, 246 to 363, 364 to 477, 478 to 585, and 586 to 680; these read SPIL…RPIF, REGP…SPKF, TKKE…GPVF, YPDP…APVI, and YPTV…VQVC. The tract at residues 156–183 is disordered; the sequence is PRDVGKVVDSDRPEGSKFRLTGKGVDQD. Basic and acidic residues predominate over residues 158-172; that stretch reads DVGKVVDSDRPEGSK. N382, N489, N500, N530, N598, N638, and N671 each carry an N-linked (GlcNAc...) asparagine glycan. G693 carries GPI-anchor amidated glycine lipidation. A propeptide spans 694–714 (removed in mature form); the sequence is ALHLSLSLLLLFSLLSLLSGL.

By contrast to classical cadherins, homodimerization in trans is not mediated by cadherin EC1 domain strand-swapping, but instead through a homophilic adhesive interface which joins two elongated EC1-EC2 domains through a region near their Ca2+-binding sites to form a tetrahedral, X-like shape.

It is found in the cell membrane. The protein localises to the cytoplasm. Its function is as follows. Cadherins are calcium-dependent cell adhesion proteins. They preferentially interact with themselves in a homophilic manner in connecting cells; cadherins may thus contribute to the sorting of heterogeneous cell types. May act as a negative regulator of neural cell growth. This is Cadherin-13 (Cdh13) from Mus musculus (Mouse).